The chain runs to 190 residues: Translation initiation factor IF-3 (190 aa).

The protein belongs to the IF-3 family. Monomer.

It localises to the cytoplasm. Functionally, IF-3 binds to the 30S ribosomal subunit and shifts the equilibrium between 70S ribosomes and their 50S and 30S subunits in favor of the free subunits, thus enhancing the availability of 30S subunits on which protein synthesis initiation begins. The chain is Translation initiation factor IF-3 from Prochlorococcus marinus subsp. pastoris (strain CCMP1986 / NIES-2087 / MED4).